Here is a 318-residue protein sequence, read N- to C-terminus: Bis(5'-nucleosyl)-tetraphosphatase, symmetrical (318 aa).

A disordered region spans residues 269-318 (PGREVTGPAPVARAPRRPRERLGRQRSRGNRGNAGNTAVPAKPPVDTPQD). Residues 282 to 297 (APRRPRERLGRQRSRG) show a composition bias toward basic residues. The segment covering 309-318 (AKPPVDTPQD) has biased composition (pro residues).

Belongs to the Ap4A hydrolase family.

The catalysed reaction is P(1),P(4)-bis(5'-adenosyl) tetraphosphate + H2O = 2 ADP + 2 H(+). Hydrolyzes diadenosine 5',5'''-P1,P4-tetraphosphate to yield ADP. This is Bis(5'-nucleosyl)-tetraphosphatase, symmetrical from Xanthomonas oryzae pv. oryzae (strain MAFF 311018).